The primary structure comprises 152 residues: Endoribonuclease YbeY (152 aa).

Zn(2+) is bound by residues histidine 114, histidine 118, and histidine 124.

Belongs to the endoribonuclease YbeY family. It depends on Zn(2+) as a cofactor.

The protein resides in the cytoplasm. In terms of biological role, single strand-specific metallo-endoribonuclease involved in late-stage 70S ribosome quality control and in maturation of the 3' terminus of the 16S rRNA. In Wigglesworthia glossinidia brevipalpis, this protein is Endoribonuclease YbeY.